Consider the following 569-residue polypeptide: Urease subunit alpha (569 aa).

Residues 131-569 enclose the Urease domain; it reads GSIDTHIHFI…VPMAQRYFLL (439 aa). His136, His138, and Lys219 together coordinate Ni(2+). At Lys219 the chain carries N6-carboxylysine. His221 provides a ligand contact to substrate. Ni(2+) contacts are provided by His248 and His274. His322 (proton donor) is an active-site residue. Asp362 is a Ni(2+) binding site.

This sequence belongs to the metallo-dependent hydrolases superfamily. Urease alpha subunit family. In terms of assembly, heterotrimer of UreA (gamma), UreB (beta) and UreC (alpha) subunits. Three heterotrimers associate to form the active enzyme. Ni cation serves as cofactor. Post-translationally, carboxylation allows a single lysine to coordinate two nickel ions.

It is found in the cytoplasm. The catalysed reaction is urea + 2 H2O + H(+) = hydrogencarbonate + 2 NH4(+). The protein operates within nitrogen metabolism; urea degradation; CO(2) and NH(3) from urea (urease route): step 1/1. The protein is Urease subunit alpha of Prochlorococcus marinus (strain MIT 9301).